The primary structure comprises 194 residues: Phosphoheptose isomerase (194 aa).

Positions 37 to 194 (ISNSFKQGGK…LIEFEMAKQA (158 aa)) constitute an SIS domain. 52–54 (NGG) provides a ligand contact to substrate. 2 residues coordinate Zn(2+): histidine 61 and glutamate 65. Substrate contacts are provided by residues glutamate 65, 93-94 (ND), 119-121 (STS), serine 124, and glutamine 172. Zn(2+) is bound by residues glutamine 172 and histidine 180.

The protein belongs to the SIS family. GmhA subfamily. Homotetramer. Zn(2+) serves as cofactor.

The protein localises to the cytoplasm. It carries out the reaction 2 D-sedoheptulose 7-phosphate = D-glycero-alpha-D-manno-heptose 7-phosphate + D-glycero-beta-D-manno-heptose 7-phosphate. Its pathway is carbohydrate biosynthesis; D-glycero-D-manno-heptose 7-phosphate biosynthesis; D-glycero-alpha-D-manno-heptose 7-phosphate and D-glycero-beta-D-manno-heptose 7-phosphate from sedoheptulose 7-phosphate: step 1/1. In terms of biological role, catalyzes the isomerization of sedoheptulose 7-phosphate in D-glycero-D-manno-heptose 7-phosphate. The polypeptide is Phosphoheptose isomerase (Haemophilus influenzae (strain 86-028NP)).